The chain runs to 101 residues: HssA/B-like protein 40 (101 aa).

The tract at residues 1–26 is disordered; it reads MTLFSSISSMSTSMSGSKSSISSFGS.

It belongs to the hssA/B family.

In Dictyostelium discoideum (Social amoeba), this protein is HssA/B-like protein 40 (hssl40).